A 180-amino-acid polypeptide reads, in one-letter code: Iron sulfur cluster assembly protein 1, mitochondrial (180 aa).

The protein belongs to the NifU family. In terms of assembly, component of the core Fe-S cluster (ISC) assembly machinery. The cofactor is [2Fe-2S] cluster.

The protein localises to the mitochondrion matrix. It functions in the pathway cofactor biosynthesis; iron-sulfur cluster biosynthesis. In terms of biological role, scaffold protein for the de novo synthesis of iron-sulfur (Fe-S) clusters within mitochondria, which is required for maturation of both mitochondrial and cytoplasmic [2Fe-2S] and [4Fe-4S] proteins. First, a [2Fe-2S] cluster is transiently assembled on the scaffold protein ISU1. In a second step, the cluster is released from ISU1, transferred to a glutaredoxin, followed by the formation of mitochondrial [2Fe-2S] proteins, the synthesis of [4Fe-4S] clusters and their target-specific insertion into the recipient apoproteins. Cluster assembly on ISU1 depends on the function of the cysteine desulfurase complex NFS1-ISD11, which serves as the sulfur donor for cluster synthesis, the iron-binding protein frataxin as the putative iron donor, and the electron transfer chain comprised of ferredoxin reductase and ferredoxin, which receive their electrons from NADH. The polypeptide is Iron sulfur cluster assembly protein 1, mitochondrial (ISU1) (Kluyveromyces lactis (strain ATCC 8585 / CBS 2359 / DSM 70799 / NBRC 1267 / NRRL Y-1140 / WM37) (Yeast)).